We begin with the raw amino-acid sequence, 420 residues long: Serine hydroxymethyltransferase (420 aa).

(6S)-5,6,7,8-tetrahydrofolate-binding positions include Leu121 and 125–127 (GHL). N6-(pyridoxal phosphate)lysine is present on Lys230.

This sequence belongs to the SHMT family. As to quaternary structure, homodimer. Pyridoxal 5'-phosphate serves as cofactor.

It localises to the cytoplasm. The enzyme catalyses (6R)-5,10-methylene-5,6,7,8-tetrahydrofolate + glycine + H2O = (6S)-5,6,7,8-tetrahydrofolate + L-serine. Its pathway is one-carbon metabolism; tetrahydrofolate interconversion. It functions in the pathway amino-acid biosynthesis; glycine biosynthesis; glycine from L-serine: step 1/1. Catalyzes the reversible interconversion of serine and glycine with tetrahydrofolate (THF) serving as the one-carbon carrier. This reaction serves as the major source of one-carbon groups required for the biosynthesis of purines, thymidylate, methionine, and other important biomolecules. Also exhibits THF-independent aldolase activity toward beta-hydroxyamino acids, producing glycine and aldehydes, via a retro-aldol mechanism. The sequence is that of Serine hydroxymethyltransferase from Streptomyces avermitilis (strain ATCC 31267 / DSM 46492 / JCM 5070 / NBRC 14893 / NCIMB 12804 / NRRL 8165 / MA-4680).